Consider the following 100-residue polypeptide: Small ribosomal subunit protein uS14c (100 aa).

Belongs to the universal ribosomal protein uS14 family. As to quaternary structure, part of the 30S ribosomal subunit.

It localises to the plastid. Its subcellular location is the chloroplast. Functionally, binds 16S rRNA, required for the assembly of 30S particles. This is Small ribosomal subunit protein uS14c from Amborella trichopoda.